Here is a 438-residue protein sequence, read N- to C-terminus: Lipid-A-disaccharide synthase (438 aa).

Belongs to the LpxB family.

The catalysed reaction is a lipid X + a UDP-2-N,3-O-bis[(3R)-3-hydroxyacyl]-alpha-D-glucosamine = a lipid A disaccharide + UDP + H(+). The protein operates within bacterial outer membrane biogenesis; LPS lipid A biosynthesis. Condensation of UDP-2,3-diacylglucosamine and 2,3-diacylglucosamine-1-phosphate to form lipid A disaccharide, a precursor of lipid A, a phosphorylated glycolipid that anchors the lipopolysaccharide to the outer membrane of the cell. In Xanthomonas campestris pv. campestris (strain 8004), this protein is Lipid-A-disaccharide synthase.